Here is a 203-residue protein sequence, read N- to C-terminus: ATP-dependent Clp protease proteolytic subunit (203 aa).

Residue serine 100 is the Nucleophile of the active site. Histidine 125 is an active-site residue.

This sequence belongs to the peptidase S14 family. In terms of assembly, fourteen ClpP subunits assemble into 2 heptameric rings which stack back to back to give a disk-like structure with a central cavity, resembling the structure of eukaryotic proteasomes.

It localises to the cytoplasm. It catalyses the reaction Hydrolysis of proteins to small peptides in the presence of ATP and magnesium. alpha-casein is the usual test substrate. In the absence of ATP, only oligopeptides shorter than five residues are hydrolyzed (such as succinyl-Leu-Tyr-|-NHMec, and Leu-Tyr-Leu-|-Tyr-Trp, in which cleavage of the -Tyr-|-Leu- and -Tyr-|-Trp bonds also occurs).. Cleaves peptides in various proteins in a process that requires ATP hydrolysis. Has a chymotrypsin-like activity. Plays a major role in the degradation of misfolded proteins. This is ATP-dependent Clp protease proteolytic subunit from Anaeromyxobacter dehalogenans (strain 2CP-1 / ATCC BAA-258).